The chain runs to 236 residues: SPbeta prophage-derived uncharacterized lipoprotein YokB (236 aa).

Residues 1–19 (MNIRFSMLVCVSFIFFTGG) form the signal peptide. Cys20 carries the N-palmitoyl cysteine lipid modification. Cys20 carries S-diacylglycerol cysteine lipidation. 2 disordered regions span residues 23–59 (SSAN…TPNM) and 204–236 (VKKV…KDNK). Basic and acidic residues predominate over residues 31–53 (SKNKNESKEESSEEGVKENDNKL).

The protein resides in the cell membrane. The polypeptide is SPbeta prophage-derived uncharacterized lipoprotein YokB (yokB) (Bacillus subtilis (strain 168)).